A 70-amino-acid polypeptide reads, in one-letter code: uncharacterized protein (70 aa).

This is an uncharacterized protein from Homo sapiens (Human).